A 69-amino-acid chain; its full sequence is Conotoxin Cal12.1p5 (69 aa).

Residues 1-23 (DLITNSYTRGKPRHVTSWRNLKT) constitute a propeptide that is removed on maturation.

In terms of processing, contains 4 disulfide bonds. In terms of tissue distribution, expressed by the venom duct.

The protein resides in the secreted. The polypeptide is Conotoxin Cal12.1p5 (Californiconus californicus (California cone)).